The primary structure comprises 986 residues: Bone morphogenetic protein 1 (986 aa).

The signal sequence occupies residues 1–22; it reads MPGVARLPLLLGLLLLPRPGRP. The propeptide occupies 23–120; it reads LDLADYTYDL…RWRGRSRSRR (98 aa). A disordered region spans residues 83–125; that stretch reads SIKAAVPGNTSTPSCQSTNGQPQRGACGRWRGRSRSRRAATSR. Residues 90-104 show a composition bias toward polar residues; the sequence is GNTSTPSCQSTNGQP. N91 carries N-linked (GlcNAc...) asparagine glycosylation. Basic residues predominate over residues 112-122; it reads WRGRSRSRRAA. The 200-residue stretch at 121–320 folds into the Peptidase M12A domain; that stretch reads AATSRPERVW…AQARKLYKCP (200 aa). N142 carries N-linked (GlcNAc...) asparagine glycosylation. Cystine bridges form between C163–C319, C183–C205, C185–C186, and C322–C348. Zn(2+) is bound at residue H213. E214 is an active-site residue. Zn(2+)-binding residues include H217 and H223. CUB domains lie at 322 to 434 and 435 to 546; these read CGET…YEAI and CGGD…NFFK. N332 and N363 each carry an N-linked (GlcNAc...) asparagine glycan. 15 disulfides stabilise this stretch: C375–C397, C435–C461, C488–C510, C551–C563, C559–C572, C574–C587, C591–C617, C644–C666, C707–C718, C714–C727, C729–C742, C747–C773, C800–C822, C860–C890, and C917–C939. The region spanning 547–588 is the EGF-like 1; calcium-binding domain; it reads EVDECSRPNRGGCEQRCLNTLGSYKCSCDPGYELAPDKRRCE. The CUB 3 domain maps to 591-703; it reads CGGFLTKLNG…KGFKAHFFSD (113 aa). N599 is a glycosylation site (N-linked (GlcNAc...) asparagine). Residues 704–743 form the EGF-like 2; calcium-binding domain; the sequence is KDECSKDNGGCQQDCVNTFGSYECQCRSGFVLHDNKHDCK. 2 consecutive CUB domains span residues 747 to 859 and 860 to 976; these read CDHK…HATE and CGGQ…YTST. R934 and R937 each carry omega-N-methylarginine.

Interacts with POSTN, the interaction promotes deposition on the extracellular matrix. The cofactor is Zn(2+). In terms of processing, proteolytically activated in the trans-Golgi network by furin-like/paired basic proprotein convertases, cleavage is not required for secretion. In terms of tissue distribution, ubiquitous.

It is found in the golgi apparatus. The protein resides in the trans-Golgi network. The protein localises to the secreted. Its subcellular location is the extracellular space. It localises to the extracellular matrix. The enzyme catalyses Cleavage of the C-terminal propeptide at Ala-|-Asp in type I and II procollagens and at Arg-|-Asp in type III.. Its activity is regulated as follows. Activity is increased by the procollagen C-endopeptidase enhancer protein. Metalloprotease that plays key roles in regulating the formation of the extracellular matrix (ECM) via processing of various precursor proteins into mature functional enzymes or structural proteins. Thereby participates in several developmental and physiological processes such as cartilage and bone formation, muscle growth and homeostasis, wound healing and tissue repair. Roles in ECM formation include cleavage of the C-terminal propeptides from procollagens such as procollagen I, II and III or the proteolytic activation of the enzyme lysyl oxidase LOX, necessary to formation of covalent cross-links in collagen and elastic fibers. Additional substrates include matricellular thrombospondin-1/THBS1 whose cleavage leads to cell adhesion disruption and TGF-beta activation. In terms of biological role, plays an important role in bone repair by acting as a coactivator of BMP7. The sequence is that of Bone morphogenetic protein 1 (BMP1) from Homo sapiens (Human).